Reading from the N-terminus, the 383-residue chain is tRNA-specific 2-thiouridylase MnmA (383 aa).

ATP-binding positions include 29–36 and Met55; that span reads GMSGGVDS. The interaction with target base in tRNA stretch occupies residues 115–117; that stretch reads NPD. Catalysis depends on Cys120, which acts as the Nucleophile. Cys120 and Cys217 are oxidised to a cystine. Gly145 contributes to the ATP binding site. The interaction with tRNA stretch occupies residues 167–169; the sequence is KDQ. Cys217 acts as the Cysteine persulfide intermediate in catalysis. The tract at residues 329–330 is interaction with tRNA; that stretch reads RY.

This sequence belongs to the MnmA/TRMU family.

It localises to the cytoplasm. The enzyme catalyses S-sulfanyl-L-cysteinyl-[protein] + uridine(34) in tRNA + AH2 + ATP = 2-thiouridine(34) in tRNA + L-cysteinyl-[protein] + A + AMP + diphosphate + H(+). Catalyzes the 2-thiolation of uridine at the wobble position (U34) of tRNA, leading to the formation of s(2)U34. The chain is tRNA-specific 2-thiouridylase MnmA from Pasteurella multocida (strain Pm70).